The following is a 323-amino-acid chain: Acetyl-coenzyme A carboxylase carboxyl transferase subunit alpha (323 aa).

One can recognise a CoA carboxyltransferase C-terminal domain in the interval 39 to 293 (RLSKKSQQLT…RRALGDSLRQ (255 aa)).

This sequence belongs to the AccA family. As to quaternary structure, acetyl-CoA carboxylase is a heterohexamer composed of biotin carboxyl carrier protein (AccB), biotin carboxylase (AccC) and two subunits each of ACCase subunit alpha (AccA) and ACCase subunit beta (AccD).

The protein localises to the cytoplasm. The enzyme catalyses N(6)-carboxybiotinyl-L-lysyl-[protein] + acetyl-CoA = N(6)-biotinyl-L-lysyl-[protein] + malonyl-CoA. The protein operates within lipid metabolism; malonyl-CoA biosynthesis; malonyl-CoA from acetyl-CoA: step 1/1. Component of the acetyl coenzyme A carboxylase (ACC) complex. First, biotin carboxylase catalyzes the carboxylation of biotin on its carrier protein (BCCP) and then the CO(2) group is transferred by the carboxyltransferase to acetyl-CoA to form malonyl-CoA. This chain is Acetyl-coenzyme A carboxylase carboxyl transferase subunit alpha, found in Burkholderia pseudomallei (strain 1106a).